Consider the following 64-residue polypeptide: Large ribosomal subunit protein uL29 (64 aa).

This sequence belongs to the universal ribosomal protein uL29 family.

The polypeptide is Large ribosomal subunit protein uL29 (Polynucleobacter necessarius subsp. necessarius (strain STIR1)).